We begin with the raw amino-acid sequence, 853 residues long: Cytochrome P450 monooxygenase mpaDE (853 aa).

Residues 1–6 (MKSLSL) are Lumenal-facing. A helical transmembrane segment spans residues 7-29 (TWITAVAVVLYLVQRYVRSYWRL). Over 30 to 853 (KDIPGPVLAK…DIENSIEGQK (824 aa)) the chain is Cytoplasmic. Cys-449 contributes to the heme binding site.

Belongs to the cytochrome P450 family. It depends on heme as a cofactor.

The protein localises to the endoplasmic reticulum membrane. It carries out the reaction 5-methylorsellinate + reduced [NADPH--hemoprotein reductase] + O2 = 4,6-dihydroxy-2-(hydroxymethyl)-3-methylbenzoate + oxidized [NADPH--hemoprotein reductase] + H2O + H(+). The enzyme catalyses 4,6-dihydroxy-2-(hydroxymethyl)-3-methylbenzoate + H(+) = 5,7-dihydroxy-4-methylphthalide + H2O. The protein operates within secondary metabolite biosynthesis; terpenoid biosynthesis. Cytochrome P450 monooxygenase; part of the gene cluster that mediates the biosynthesis of mycophenolic acid (MPA), the first isolated antibiotic natural product in the world obtained from a culture of Penicillium brevicompactum in 1893. MpaDE is an endoplasmic reticulum-bound enzyme that catalyzes the conversion of 5-methylorsellinic acid (5MOA) into the phthalide compound 5,7-dihydroxy-4,6-dimethylphthalide (DHMP). MpaDE first catalyzes hydroxylation of 5-MOA to 4,6-dihydroxy-2-(hydroxymethyl)-3-methylbenzoic acid (DHMB), and then acts as a lactone synthase that catalyzes the ring closure to convert DHMB into DHMP. The first step of the pathway is the synthesis of 5-methylorsellinic acid (5MOA) by the cytosolic polyketide synthase mpaC. 5MOA is then converted to the phthalide compound 5,7-dihydroxy-4,6-dimethylphthalide (DHMP) by the endoplasmic reticulum-bound cytochrome P450 monooxygenase mpaDE. MpaDE first catalyzes hydroxylation of 5-MOA to 4,6-dihydroxy-2-(hydroxymethyl)-3-methylbenzoic acid (DHMB). MpaDE then acts as a lactone synthase that catalyzes the ring closure to convert DHMB into DHMP. The next step is the prenylation of DHMP by the Golgi apparatus-associated prenyltransferase mpaA to yield farnesyl-DHMP (FDHMP). The ER-bound oxygenase mpaB then mediates the oxidative cleavage the C19-C20 double bond in FDHMP to yield FDHMP-3C via a mycophenolic aldehyde intermediate. The O-methyltransferase mpaG catalyzes the methylation of FDHMP-3C to yield MFDHMP-3C. After the cytosolic methylation of FDHMP-3C, MFDHMP-3C enters into peroxisomes probably via free diffusion due to its low molecular weight. Upon a peroxisomal CoA ligation reaction, catalyzed by a beta-oxidation component enzyme acyl-CoA ligase ACL891, MFDHMP-3C-CoA would then be restricted to peroxisomes for the following beta-oxidation pathway steps. The peroxisomal beta-oxidation machinery than converts MFDHMP-3C-CoA into MPA_CoA, via a beta-oxidation chain-shortening process. Finally mpaH acts as a peroxisomal acyl-CoA hydrolase with high substrate specificity toward MPA-CoA to release the final product MPA. The polypeptide is Cytochrome P450 monooxygenase mpaDE (Penicillium brevicompactum).